We begin with the raw amino-acid sequence, 316 residues long: MYEWLNALPKAELHLHLEGTLEPELLFALAERNRIALPWNDVETLRKAYAFNNLQEFLDLYYAGADVLRTEQDFYDLTWAYLQKCKAQNVVHVEPFFDPQTHTDRGIPFEVVLAGIRAALQDGEKLLGIRHGLILSFLRHLSEEQAQKTLDQALPFRDAFIAVGLDSSEVGHPPSKFQRVFDRARSEGFLTVAHAGEEGPPEYIWEALDLLKVERIDHGVRAFEDERLMRRLIDEQIPLTVCPLSNTKLCVFDDMSQHTILDMLERGVKVTVNSDDPAYFGGYVTENFHALQQSLGMTEEQARRLAQNSLDARLVK.

Zn(2+) is bound by residues His-14, His-16, and His-194. Residue Glu-197 is the Proton donor of the active site. Zn(2+) is bound at residue Asp-275. Asp-276 provides a ligand contact to substrate.

Belongs to the metallo-dependent hydrolases superfamily. Adenosine and AMP deaminases family. Adenine deaminase type 2 subfamily. It depends on Zn(2+) as a cofactor.

The catalysed reaction is adenine + H2O + H(+) = hypoxanthine + NH4(+). Its function is as follows. Catalyzes the hydrolytic deamination of adenine to hypoxanthine. Plays an important role in the purine salvage pathway and in nitrogen catabolism. This Pseudomonas aeruginosa (strain UCBPP-PA14) protein is Adenine deaminase.